The following is a 300-amino-acid chain: MGRAREVGWMAAGLMIGAGACYCVYKLTIGRDDSEKLEEEGEEEWDDDQELDEEEPDIWFDFETMARPWTEDGDWTEPGAPGGTEDRPSGGGKANRAHPIKQRPFPYEHKNTWSAQNCKNGSCVLDLSKCLFIQGKLLFAEPKDAGFPFSQDINSHLASLSMARNTSPTPDPTVREALCAPDNLNASIESQGQIKMYINEVCRETVSRCCNSFLQQAGLNLLISMTVINNMLAKSASDLKFPLISEGSGCAKVQVLKPLMGLSEKPVLAGELVGAQMLFSFMSLFIRNGNREILLETPAP.

Residues 1 to 6 are Mitochondrial intermembrane-facing; the sequence is MGRARE. Mitochondrion outer membrane (MOM)-targeting sequence regions lie at residues 1-6 and 26-36; these read MGRARE and KLTIGRDDSEK. Residues 7–27 traverse the membrane as a helical; Signal-anchor segment; the sequence is VGWMAAGLMIGAGACYCVYKL. The Cytoplasmic segment spans residues 28-300; sequence TIGRDDSEKL…REILLETPAP (273 aa). Disordered regions lie at residues 35–54 and 69–99; these read EKLEEEGEEEWDDDQELDEE and WTEDGDWTEPGAPGGTEDRPSGGGKANRAHP.

This sequence belongs to the eutherian X-chromosome-specific Armcx family.

The protein resides in the mitochondrion. The protein localises to the mitochondrion outer membrane. In terms of biological role, may regulate the dynamics and distribution of mitochondria in neural cells. The sequence is that of Protein ARMCX6 (ARMCX6) from Homo sapiens (Human).